Reading from the N-terminus, the 4118-residue chain is BEACH domain-containing protein lvsB (4118 aa).

The segment at 1–35 is disordered; sequence MNRNFNNINNNNNNNNNYHGYQYHQQQQQQNQQQQ. A helical membrane pass occupies residues 198 to 218; sequence GIPLSFLNFLITILLRILSLP. The span at 236–257 shows a compositional bias: low complexity; it reads NFSGNNNNNFNNNNHYFNNNHN. Disordered regions lie at residues 236 to 267, 332 to 382, and 621 to 644; these read NFSG…QHHQ, PLSS…SKNN, and ISSS…KNNN. Residues 258-267 show a composition bias toward basic residues; it reads NHNHHYQHHQ. Composition is skewed to low complexity over residues 332–381 and 621–636; these read PLSS…NSKN and ISSS…NSDG. A helical membrane pass occupies residues 827–847; sequence YLVLYMIVTEILSLLLELLVP. Over residues 1155–1170 the composition is skewed to low complexity; that stretch reads NGGSISPSSIINNMNS. Disordered stretches follow at residues 1155-1213, 1599-1622, 1643-1681, 1928-1968, 2015-2044, 2537-2574, 2702-2741, 2754-2791, 2902-3007, 3245-3265, and 3348-3418; these read NGGS…FNNN, ANTT…TAVS, NSGI…STNL, GNFL…ISSS, STNN…SNSL, RRGS…NNNE, FSPS…TSDS, DQSN…NGIN, NTNS…NSNE, PLIP…TKDQ, and KTTA…NIVK. Low complexity-rich tracts occupy residues 1657–1678 and 1935–1968; these read SIGS…SGSS and SSSN…ISSS. The segment covering 2540-2571 has biased composition (low complexity); it reads SSSSSTNSTTNNNNNNSSTTTTSNNNNNNNEN. Residues 2705-2738 are a coiled coil; sequence SRSKEKEKEKEKEKEKEKEKEKERERERETTNVT. Positions 2706–2734 are enriched in basic and acidic residues; sequence RSKEKEKEKEKEKEKEKEKEKERERERET. Composition is skewed to low complexity over residues 2758 to 2791 and 2902 to 2947; these read EESS…NGIN and NTNS…NSTN. Over residues 2948–2962 the composition is skewed to polar residues; that stretch reads QTITDTTLSPASSNV. Low complexity-rich tracts occupy residues 2963-2980 and 2988-3006; these read SISN…NNNS and SNIN…SNSN. In terms of domain architecture, BEACH-type PH spans 3303-3479; sequence KLGEKVNEVF…DRDIVYDLIM (177 aa). Over residues 3357 to 3411 the composition is skewed to low complexity; that stretch reads SNNNNNNNNNNNNNNNNNNNNSNDTTSSINSTTATNTNTTNTTTTNTTTTTTTTN. Positions 3491-3782 constitute a BEACH domain; it reads AEVHGNILKM…QIFTKPHPKK (292 aa). WD repeat units lie at residues 3868–3907, 3924–3963, 3984–4027, 4029–4073, and 4075–4114; these read VLND…GTIM, GHTN…YINS, TFET…LAKQ, FVND…KIRT, and VSKS…GYSS.

The protein resides in the membrane. It is found in the lysosome. Its subcellular location is the endosome. Functionally, involved in negative regulation of lysosome biogenesis, by limiting the heterotypic fusion of early endosomes and postlysosomal compartments. This Dictyostelium discoideum (Social amoeba) protein is BEACH domain-containing protein lvsB (lvsB).